A 340-amino-acid chain; its full sequence is Methionine import ATP-binding protein MetN (340 aa).

Residues 6–245 (IEFEGITKVF…PQTNVAKRFV (240 aa)) form the ABC transporter domain. 42–49 (GYSGAGKS) serves as a coordination point for ATP.

Belongs to the ABC transporter superfamily. Methionine importer (TC 3.A.1.24) family. In terms of assembly, the complex is composed of two ATP-binding proteins (MetN), two transmembrane proteins (MetI) and a solute-binding protein (MetQ).

Its subcellular location is the cell membrane. The catalysed reaction is L-methionine(out) + ATP + H2O = L-methionine(in) + ADP + phosphate + H(+). The enzyme catalyses D-methionine(out) + ATP + H2O = D-methionine(in) + ADP + phosphate + H(+). Its function is as follows. Part of the ABC transporter complex MetNIQ involved in methionine import. Responsible for energy coupling to the transport system. The sequence is that of Methionine import ATP-binding protein MetN from Corynebacterium diphtheriae (strain ATCC 700971 / NCTC 13129 / Biotype gravis).